Consider the following 310-residue polypeptide: Proline dehydrogenase (310 aa).

Lysine 98 lines the substrate pocket. Aspartate 135 is an active-site residue. Residues methionine 136, glutamine 166, 187–192 (RMVKGA), 229–230 (TH), and 292–295 (RIAE) each bind FAD. Arginine 187 is an active-site residue. Residue 291 to 292 (RR) coordinates substrate.

It belongs to the proline dehydrogenase family. It depends on FAD as a cofactor.

The catalysed reaction is L-proline + a quinone = (S)-1-pyrroline-5-carboxylate + a quinol + H(+). It functions in the pathway amino-acid degradation; L-proline degradation into L-glutamate; L-glutamate from L-proline: step 1/2. Its function is as follows. Converts proline to delta-1-pyrroline-5-carboxylate. This Deinococcus radiodurans (strain ATCC 13939 / DSM 20539 / JCM 16871 / CCUG 27074 / LMG 4051 / NBRC 15346 / NCIMB 9279 / VKM B-1422 / R1) protein is Proline dehydrogenase.